Consider the following 102-residue polypeptide: uncharacterized protein (102 aa).

Its function is as follows. Essential for virus function. This is an uncharacterized protein from Saccharolobus solfataricus (Sulfolobus solfataricus).